We begin with the raw amino-acid sequence, 151 residues long: RNA polymerase-binding transcription factor DksA (151 aa).

A coiled-coil region spans residues Glu-34–Glu-54. Zn(2+) contacts are provided by Cys-114, Cys-117, Cys-135, and Cys-138. The dksA C4-type zinc-finger motif lies at Cys-114–Cys-138.

Belongs to the DksA family. Interacts directly with the RNA polymerase.

The protein localises to the cytoplasm. Its function is as follows. Transcription factor that acts by binding directly to the RNA polymerase (RNAP). Required for negative regulation of rRNA expression and positive regulation of several amino acid biosynthesis promoters. Also required for regulation of fis expression. This chain is RNA polymerase-binding transcription factor DksA, found in Salmonella typhi.